Here is a 209-residue protein sequence, read N- to C-terminus: Peroxynitrite isomerase 2 (209 aa).

The GXWXGXG motif lies at 56 to 62 (GVWRGEG). Heme b-binding residues include lysine 172 and histidine 199.

This sequence belongs to the nitrobindin family. In terms of assembly, homodimer. Heme b serves as cofactor.

The enzyme catalyses peroxynitrite = nitrate. It functions in the pathway nitrogen metabolism. Functionally, heme-binding protein able to scavenge peroxynitrite and to protect free L-tyrosine against peroxynitrite-mediated nitration, by acting as a peroxynitrite isomerase that converts peroxynitrite to nitrate. Therefore, this protein likely plays a role in peroxynitrite sensing and in the detoxification of reactive nitrogen and oxygen species (RNS and ROS, respectively). Is able to bind nitric oxide (NO) in vitro, but may act as a sensor of peroxynitrite levels in vivo. This chain is Peroxynitrite isomerase 2, found in Mycolicibacterium gilvum (strain PYR-GCK) (Mycobacterium gilvum (strain PYR-GCK)).